A 279-amino-acid chain; its full sequence is Coiled-coil domain-containing protein 117 (279 aa).

The disordered stretch occupies residues 1–82 (MAALGRPFSG…REEEEDDDCP (82 aa)). Residue R48 is modified to Omega-N-methylarginine. Residue S53 is modified to Phosphoserine. A compositionally biased stretch (basic residues) spans 63-72 (VSVHCKKKHK). Residues 141-168 (QCEVARRKLQEIEDRIIDEDEEVEADRN) adopt a coiled-coil conformation. The tract at residues 217–279 (LLSDKPKPSS…ATSTEEEMEL (63 aa)) is disordered. 2 stretches are compositionally biased toward polar residues: residues 224–235 (PSSNTKNYTGES) and 262–272 (SLYNSLETATS).

Interacts with CIAO2B; the interaction is direct. Interacts with MMS19; the interaction is indirect.

The protein resides in the cytoplasm. The protein localises to the cytoskeleton. It localises to the spindle. Its subcellular location is the nucleus. In terms of biological role, facilitates DNA repair, cell cycle progression, and cell proliferation through its interaction with CIAO2B. This is Coiled-coil domain-containing protein 117 from Homo sapiens (Human).